The following is a 627-amino-acid chain: Membrane protein insertase YidC (627 aa).

Residues 8–28 (LFLALILSMGIWMGVNYFFFP) traverse the membrane as a helical segment. The segment covering 33–57 (KKNTETKQTQSDKTSENTKQQITSG) has biased composition (polar residues). The tract at residues 33-68 (KKNTETKQTQSDKTSENTKQQITSGKTKESNSADPV) is disordered. Basic and acidic residues predominate over residues 58 to 68 (KTKESNSADPV). The next 4 helical transmembrane spans lie at 417-437 (FTIP…KLVF), 488-508 (VGGC…YTAF), 536-556 (AIPY…LMVG), and 575-595 (MLMY…PSGV).

This sequence belongs to the OXA1/ALB3/YidC family. Type 1 subfamily. In terms of assembly, interacts with the Sec translocase complex via SecD. Specifically interacts with transmembrane segments of nascent integral membrane proteins during membrane integration.

It is found in the cell inner membrane. Its function is as follows. Required for the insertion and/or proper folding and/or complex formation of integral membrane proteins into the membrane. Involved in integration of membrane proteins that insert both dependently and independently of the Sec translocase complex, as well as at least some lipoproteins. Aids folding of multispanning membrane proteins. The chain is Membrane protein insertase YidC from Leptospira interrogans serogroup Icterohaemorrhagiae serovar copenhageni (strain Fiocruz L1-130).